A 442-amino-acid chain; its full sequence is UDP-glycosyltransferase 79B7 (442 aa).

Residues Ser-260, 319-321 (VQQ), 336-344 (HCGPGTIWE), and 358-361 (LSDQ) contribute to the UDP-alpha-D-glucose site.

It belongs to the UDP-glycosyltransferase family.

In Arabidopsis thaliana (Mouse-ear cress), this protein is UDP-glycosyltransferase 79B7 (UGT79B7).